The chain runs to 89 residues: Small ribosomal subunit protein uS14 (89 aa).

Belongs to the universal ribosomal protein uS14 family. Part of the 30S ribosomal subunit. Contacts proteins S3 and S10.

Functionally, binds 16S rRNA, required for the assembly of 30S particles and may also be responsible for determining the conformation of the 16S rRNA at the A site. The polypeptide is Small ribosomal subunit protein uS14 (Deinococcus radiodurans (strain ATCC 13939 / DSM 20539 / JCM 16871 / CCUG 27074 / LMG 4051 / NBRC 15346 / NCIMB 9279 / VKM B-1422 / R1)).